The following is a 224-amino-acid chain: Urease accessory protein UreF (224 aa).

This sequence belongs to the UreF family. UreD, UreF and UreG form a complex that acts as a GTP-hydrolysis-dependent molecular chaperone, activating the urease apoprotein by helping to assemble the nickel containing metallocenter of UreC. The UreE protein probably delivers the nickel.

Its subcellular location is the cytoplasm. In terms of biological role, required for maturation of urease via the functional incorporation of the urease nickel metallocenter. This chain is Urease accessory protein UreF, found in Pseudomonas fluorescens (strain Pf0-1).